The sequence spans 327 residues: Quinone oxidoreductase 1 (327 aa).

Residues 42–46, tyrosine 130, 152–153, 173–177, tyrosine 192, serine 216, 238–241, 264–266, and arginine 317 contribute to the NADP(+) site; these read FIDTY, GV, GTAQK, FGNS, and PSL.

It belongs to the zinc-containing alcohol dehydrogenase family. Quinone oxidoreductase subfamily. Homodimer.

The catalysed reaction is 2 a quinone + NADPH + H(+) = 2 a 1,4-benzosemiquinone + NADP(+). This is Quinone oxidoreductase 1 (qorA) from Escherichia coli (strain K12).